We begin with the raw amino-acid sequence, 87 residues long: NADH dehydrogenase [ubiquinone] 1 alpha subcomplex subunit 4-like 2 (87 aa).

This sequence belongs to the complex I NDUFA4 subunit family.

This chain is NADH dehydrogenase [ubiquinone] 1 alpha subcomplex subunit 4-like 2 (Ndufa4l2), found in Mus musculus (Mouse).